A 365-amino-acid polypeptide reads, in one-letter code: Cobalt-precorrin-5B C(1)-methyltransferase (365 aa).

This sequence belongs to the CbiD family.

The catalysed reaction is Co-precorrin-5B + S-adenosyl-L-methionine = Co-precorrin-6A + S-adenosyl-L-homocysteine. It participates in cofactor biosynthesis; adenosylcobalamin biosynthesis; cob(II)yrinate a,c-diamide from sirohydrochlorin (anaerobic route): step 6/10. Its function is as follows. Catalyzes the methylation of C-1 in cobalt-precorrin-5B to form cobalt-precorrin-6A. The sequence is that of Cobalt-precorrin-5B C(1)-methyltransferase from Pseudomonas fluorescens (strain Pf0-1).